A 429-amino-acid chain; its full sequence is Serine--tRNA ligase (429 aa).

An L-serine-binding site is contributed by T235–E237. ATP is bound at residue R266–E268. Residue E289 participates in L-serine binding. E353–S356 provides a ligand contact to ATP. S389 contacts L-serine.

Belongs to the class-II aminoacyl-tRNA synthetase family. Type-1 seryl-tRNA synthetase subfamily. As to quaternary structure, homodimer. The tRNA molecule binds across the dimer.

It localises to the cytoplasm. The catalysed reaction is tRNA(Ser) + L-serine + ATP = L-seryl-tRNA(Ser) + AMP + diphosphate + H(+). It carries out the reaction tRNA(Sec) + L-serine + ATP = L-seryl-tRNA(Sec) + AMP + diphosphate + H(+). Its pathway is aminoacyl-tRNA biosynthesis; selenocysteinyl-tRNA(Sec) biosynthesis; L-seryl-tRNA(Sec) from L-serine and tRNA(Sec): step 1/1. Catalyzes the attachment of serine to tRNA(Ser). Is also able to aminoacylate tRNA(Sec) with serine, to form the misacylated tRNA L-seryl-tRNA(Sec), which will be further converted into selenocysteinyl-tRNA(Sec). This Histophilus somni (strain 2336) (Haemophilus somnus) protein is Serine--tRNA ligase.